Consider the following 880-residue polypeptide: Alanine--tRNA ligase (880 aa).

Residues His-563, His-567, Cys-665, and His-669 each coordinate Zn(2+).

It belongs to the class-II aminoacyl-tRNA synthetase family. The cofactor is Zn(2+).

Its subcellular location is the cytoplasm. The enzyme catalyses tRNA(Ala) + L-alanine + ATP = L-alanyl-tRNA(Ala) + AMP + diphosphate. Catalyzes the attachment of alanine to tRNA(Ala) in a two-step reaction: alanine is first activated by ATP to form Ala-AMP and then transferred to the acceptor end of tRNA(Ala). Also edits incorrectly charged Ser-tRNA(Ala) and Gly-tRNA(Ala) via its editing domain. In Desulforudis audaxviator (strain MP104C), this protein is Alanine--tRNA ligase.